We begin with the raw amino-acid sequence, 772 residues long: Probable beta-glucosidase M (772 aa).

A signal peptide spans 1-20 (MLTSWGKTGFVLALALGGRA). A glycan (N-linked (GlcNAc...) asparagine) is linked at asparagine 259. Aspartate 287 is an active-site residue. 7 N-linked (GlcNAc...) asparagine glycosylation sites follow: asparagine 315, asparagine 322, asparagine 438, asparagine 523, asparagine 547, asparagine 574, and asparagine 586.

The protein belongs to the glycosyl hydrolase 3 family.

It localises to the secreted. The catalysed reaction is Hydrolysis of terminal, non-reducing beta-D-glucosyl residues with release of beta-D-glucose.. It participates in glycan metabolism; cellulose degradation. In terms of biological role, beta-glucosidases are one of a number of cellulolytic enzymes involved in the degradation of cellulosic biomass. Catalyzes the last step releasing glucose from the inhibitory cellobiose. This is Probable beta-glucosidase M (bglM) from Emericella nidulans (strain FGSC A4 / ATCC 38163 / CBS 112.46 / NRRL 194 / M139) (Aspergillus nidulans).